Consider the following 547-residue polypeptide: Phosphoethanolamine transferase EptA (547 aa).

Topologically, residues 1–9 are cytoplasmic; the sequence is MLKRFLKRP. A helical membrane pass occupies residues 10–30; the sequence is VLGQIAWLLLFSFYIAVCLNI. Residues 31–47 are Periplasmic-facing; sequence AFYKQVLQDLPLNSLRN. A helical transmembrane segment spans residues 48–68; the sequence is VLVFISMPVVAFSVVNSVLTL. Residues 69-79 are Cytoplasmic-facing; sequence ASFIWLNRLLA. Residues 80-100 traverse the membrane as a helical segment; that stretch reads CVFILVGAAAQYFILTYGIII. At 101 to 123 the chain is on the periplasmic side; that stretch reads DRSMIANMMDTTPAETFALMTPQ. Residues 124–144 form a helical membrane-spanning segment; the sequence is MVLTLGLSGVLAAVIAFWVKI. Over 145–154 the chain is Cytoplasmic; it reads RPATPRLRSG. The helical transmembrane segment at 155-175 threads the bilayer; sequence LYRLASVLISILLVILVAAFF. At 176–547 the chain is on the periplasmic side; the sequence is YKDYASLFRN…ILQPCRRLSE (372 aa).

It belongs to the phosphoethanolamine transferase family. EptA subfamily.

The protein localises to the cell inner membrane. It functions in the pathway bacterial outer membrane biogenesis; LPS lipid A biosynthesis. Its function is as follows. Catalyzes the addition of a phosphoethanolamine moiety to the lipid A. The phosphoethanolamine modification is required for resistance to polymyxin. The polypeptide is Phosphoethanolamine transferase EptA (eptA) (Salmonella typhimurium (strain LT2 / SGSC1412 / ATCC 700720)).